Here is a 327-residue protein sequence, read N- to C-terminus: GTPase Obg (327 aa).

The 159-residue stretch at 1–159 folds into the Obg domain; the sequence is MQFIDQANII…WEVQLELKLL (159 aa). The OBG-type G domain occupies 160–327; sequence AEVGIIGLPN…SLLSEVWKRI (168 aa). Residues 166–173, 191–195, 213–216, 280–283, and 309–311 each bind ATP; these read GLPNAGKS, FTTLI, DIPG, NKME, and SSS. S173 and T193 together coordinate Mg(2+).

This sequence belongs to the TRAFAC class OBG-HflX-like GTPase superfamily. OBG GTPase family. In terms of assembly, monomer. Requires Mg(2+) as cofactor.

The protein resides in the cytoplasm. An essential GTPase which binds GTP, GDP and possibly (p)ppGpp with moderate affinity, with high nucleotide exchange rates and a fairly low GTP hydrolysis rate. Plays a role in control of the cell cycle, stress response, ribosome biogenesis and in those bacteria that undergo differentiation, in morphogenesis control. The sequence is that of GTPase Obg from Prochlorococcus marinus (strain MIT 9215).